A 640-amino-acid chain; its full sequence is MLISGRSGWAILGTGGKAAVNRGDAGKLGGQSVIARAHVKVDGDVVSRFATCCRALGLAVYDRQRPADLAAARSGFTALARIAHDQCDVWIGLAAAGDVSTPVLAAISCTADTAGMLQRQVELAPAALGFHYDTGLYLQFRAIGPDDFHLAYAASLASTGGPGPYAEADQIVTGIIDRRPGWRDARWVAAVIHYRAGRWSDVVKLLTPIVNDPDIDEAYTHAAKIALGTALARLGMFAPALSYLEEPAGPVAVAAVDGALAKALVLRAHTDEESASEVLQDLYAAHPDNEQIEQALSDTSFGIVTTTAARIDARTDPWDPETEPGVEDFIDPAAHERKAVLLHEAERQLAEFIGLDEVKNQVSRLKSSVAMELVRKQRGLMVAQRAHHLVFAGPPGTGKTTIARVVAKVYCGLGLLKKENIREVHRADLIGQHIGETEAKTNAVIDSALDGVLFLDEAYALVATGAKNDFGLVAIDTLLARMENDRDRLVVIIAGYRADLDKFLDTNEGLRSRFTRNIDFPSYASHELVEIAHKMAEQRDSVFEQAALDELEVLFANLATSSTPDSNGISRRSLDIAGNGRFVRNIVERSEEEREFRLDHSNNVGTGELSDEELMTVTSEDVRRSVEPLLRGLGLMVPHD.

Residue 393-400 (GPPGTGKT) coordinates ATP.

The protein belongs to the CbxX/CfxQ family. In terms of assembly, part of the ESX-3 / type VII secretion system (T7SS), which is composed of cytosolic and membrane components.

Its subcellular location is the cytoplasm. In terms of biological role, part of an ESX-3 / type VII specialized secretion system (T7SS), which exports several proteins. EccA3 exhibits ATPase activity and may provide energy for the export of ESX-3 substrates. The sequence is that of ESX-3 secretion system protein EccA3 from Mycobacterium leprae (strain TN).